The sequence spans 141 residues: Endoribonuclease YbeY (141 aa).

The Zn(2+) site is built by His100, His104, and His110.

Belongs to the endoribonuclease YbeY family. Zn(2+) serves as cofactor.

It localises to the cytoplasm. In terms of biological role, single strand-specific metallo-endoribonuclease involved in late-stage 70S ribosome quality control and in maturation of the 3' terminus of the 16S rRNA. This chain is Endoribonuclease YbeY, found in Helicobacter pylori (strain J99 / ATCC 700824) (Campylobacter pylori J99).